Reading from the N-terminus, the 256-residue chain is Gramicidin S biosynthesis protein GrsT (256 aa).

Serine 95 is an active-site residue.

The protein belongs to the thioesterase family.

It functions in the pathway antibiotic biosynthesis; gramicidin S biosynthesis. Functionally, probable thioesterase involved in the biosynthesis of gramicidin S. This chain is Gramicidin S biosynthesis protein GrsT (grsT), found in Aneurinibacillus migulanus (Bacillus migulanus).